Reading from the N-terminus, the 105-residue chain is Large ribosomal subunit protein bL34m (105 aa).

Residues 1-16 (MPLFARLCQPQSRRMF) constitute a mitochondrion transit peptide.

It belongs to the bacterial ribosomal protein bL34 family. In terms of assembly, component of the mitochondrial large ribosomal subunit (mt-LSU). Mature yeast 74S mitochondrial ribosomes consist of a small (37S) and a large (54S) subunit. The 37S small subunit contains a 15S ribosomal RNA (15S mt-rRNA) and 34 different proteins. The 54S large subunit contains a 21S rRNA (21S mt-rRNA) and 46 different proteins.

The protein resides in the mitochondrion. Its function is as follows. Component of the mitochondrial ribosome (mitoribosome), a dedicated translation machinery responsible for the synthesis of mitochondrial genome-encoded proteins, including at least some of the essential transmembrane subunits of the mitochondrial respiratory chain. The mitoribosomes are attached to the mitochondrial inner membrane and translation products are cotranslationally integrated into the membrane. The polypeptide is Large ribosomal subunit protein bL34m (Saccharomyces cerevisiae (strain ATCC 204508 / S288c) (Baker's yeast)).